A 396-amino-acid chain; its full sequence is Serine/threonine-protein kinase VRK1 (396 aa).

A Protein kinase domain is found at 37-317 (WKVGLPIGQG…LLDYTEKPLY (281 aa)). Residues 43–51 (IGQGGFGCI) and lysine 71 contribute to the ATP site. Lysine 71 participates in a covalent cross-link: Glycyl lysine isopeptide (Lys-Gly) (interchain with G-Cter in SUMO2). Catalysis depends on aspartate 177, which acts as the Proton acceptor. Position 342 is a phosphoserine; by PLK3 (serine 342). Residues 354–396 (ITKKRKKEIEESKEPGVEDTEWSNTQTEEAIQTRSRTRKRVQK) form a disordered region. A Phosphothreonine; by autocatalysis modification is found at threonine 355. The span at 360-369 (KEIEESKEPG) shows a compositional bias: basic and acidic residues. Residues 375–387 (WSNTQTEEAIQTR) are compositionally biased toward polar residues. Residue serine 376 is modified to Phosphoserine. Threonine 378 carries the phosphothreonine modification. Positions 387–393 (RSRTRKR) are required for interaction with the nucleosome.

The protein belongs to the protein kinase superfamily. CK1 Ser/Thr protein kinase family. VRK subfamily. As to quaternary structure, interacts with HDAC1, KAT2B, SETDB1, KDM3A and KDM4A. Associates with the nucleosome through interactions with nucleosome DNA, histone H2A and histone H2B; the interaction with H2A and H2B is mediated by the nucleosome acidic patch, a cluster of negatively charged residues of H2A and H2B forming a cleft within the nucleosome core. (Microbial infection) Interacts with vaccinia protein B12; this interaction inhibits the repressive activity of the vaccinia virus B12 pseudokinase on viral replication factory formation. In terms of processing, autophosphorylated at various serine and threonine residues. Autophosphorylation does not impair its ability to phosphorylate p53/TP53. Phosphorylation by PLK3 leads to induction of Golgi fragmentation during mitosis. In terms of tissue distribution, widely expressed. Highly expressed in fetal liver, testis and thymus.

The protein resides in the nucleus. It is found in the cytoplasm. It localises to the cajal body. The enzyme catalyses L-seryl-[protein] + ATP = O-phospho-L-seryl-[protein] + ADP + H(+). It carries out the reaction L-threonyl-[protein] + ATP = O-phospho-L-threonyl-[protein] + ADP + H(+). Active in presence of Mn(2+), Mg(2+) and Zn(2+), but is not functional with Ca(2+) or Cu(2+). Has a higher affinity for Mn(2+) than for Mg(2+). RAN inhibits its autophosphorylation and its ability to phosphorylate histone H3. In terms of biological role, serine/threonine kinase involved in the regulation of key cellular processes including the cell cycle, nuclear condensation, transcription regulation, and DNA damage response. Controls chromatin organization and remodeling by mediating phosphorylation of histone H3 on 'Thr-4' and histone H2AX (H2aXT4ph). It also phosphorylates KAT5 in response to DNA damage, promoting KAT5 association with chromatin and histone acetyltransferase activity. Is involved in the regulation of cell cycle progression of neural progenitors, and is required for proper cortical neuronal migration. Is involved in neurite elongation and branching in motor neurons, and has an essential role in Cajal bodies assembly, acting through COIL phosphorylation and the control of coilin degradation. Involved in Golgi disassembly during the cell cycle: following phosphorylation by PLK3 during mitosis, it is required to induce Golgi fragmentation. Phosphorylates BANF1: disrupts its ability to bind DNA, reduces its binding to LEM domain-containing proteins and causes its relocalization from the nucleus to the cytoplasm. Phosphorylates TP53BP1 and p53/TP53 on 'Thr-18', preventing the interaction between p53/TP53 and MDM2. Phosphorylates ATF2 which activates its transcriptional activity. Phosphorylates JUN. The chain is Serine/threonine-protein kinase VRK1 from Homo sapiens (Human).